The following is a 152-amino-acid chain: Urease accessory protein UreE (152 aa).

This sequence belongs to the UreE family.

It is found in the cytoplasm. Involved in urease metallocenter assembly. Binds nickel. Probably functions as a nickel donor during metallocenter assembly. This chain is Urease accessory protein UreE, found in Enterobacter sp. (strain 638).